The chain runs to 380 residues: MAAPWWRAAFSVTGRCRGISTSASLSRRTPPLGPMPNEDIDVSNLERLEKYRSFERYRRRAEQEAHAPHWWRTYREYFLKETDPKDRINIGLPPPRVSRTQKLQERKRFLQELRANSEEERAARLRTASIPLEAVRAEWERTCGPYHKQRLAEYYGLYRDLFHGATFVPWVPLHVAYALGEEDLIPVYHGNEVTPTEASQAPEVTYEADKDSLWTLLFINLDGHLLEPDAEYLHWLVTNIPSNRVAEGQESCPYLPPFPARGSGFHRFAFLLFKQDKPINFSEDTRPSPCYQLAQRTFHTLDFYKKHQEAMTPAGLAFFQCRWDDSVTHTFHQLLDMREPVFEFVRPPPYHPKQKRFPHQQPLRYLDRYRDSHEPTYGIY.

Residues 1 to 26 (MAAPWWRAAFSVTGRCRGISTSASLS) constitute a mitochondrion transit peptide. Residues 98–123 (SRTQKLQERKRFLQELRANSEEERAA) adopt a coiled-coil conformation.

This sequence belongs to the phosphatidylethanolamine-binding protein family. Mitochondrion-specific ribosomal protein mL38 subfamily. Component of the mitochondrial ribosome large subunit (39S) which comprises a 16S rRNA and about 50 distinct proteins.

It localises to the mitochondrion. This Rattus norvegicus (Rat) protein is Large ribosomal subunit protein mL38 (Mrpl38).